Reading from the N-terminus, the 1213-residue chain is MKGMSHEPKSPSIGMLSTATRTTATVNPLTPSPLNGALVPTGSPATSSTLSAQAAPSSSFAAALRKLAKQAEEPRGSSLSSESSPVSSPATNHSSPASTPKRVPMGPIIVPPGGHSVPSTPPVVTIAPTKTVNGVWRSESRQDSGSRGSSSGRERLLVEPPLAQEKAAGPAIPSHLLSTPYPFGLSPGSVVQDSRFQPLNLQRPVHHVVPPSTVTEDYLRSFRPYHTAEDLRMSSLPPLGLDPATAAAYYHPSYLAPHPFPHPAFRMDDSYCLSALRSPFYPIPTPGSLPPLHPSAMHLHLSGVRYPPELSHSSLAALHSERMSSLSAERLQMDEELRREREREREREREADREREKEREREQREKEREKELEREREKERERELERQREQRAREKELLAAKALEPTTFLPVAELHGLRGHSTEERPKPSEQLTPTRAEKLKDVGLQAPKPVQHPLHPVPAPHHTVPSLISSHGIFSLPGSSATTALLIQRTNEEEKWLARQRRLRQEKEDRQSQVSEFRQQVLEQHLDLGRPLVPTEAEHRPESTRPGTNRHEQGSREPPQHFGGPPPLISPKPQQHTVPTALWNPVSLMDNALETRRAESHSLHSHPTAFEPSRQAAVPLVKVERVYCSEKAEEPRKREATPLDKYQPPPPPPPPREAGSLEPQTFPHGPGPFLTELEKSTQTILGQQRPSLSQATSFGELSGPLKPGSPYCHPTARGPDPAYIYDEFLQQRRKLVSKLDLEERRRREAQEKGYYYDLDDSYDESDEEEVRAHLRCVAEQPPLKLDTSSEKLEFLQLFGLTTQQQKEELVAQKRRKRRRMLRERSPSPPAVQCKRQTPSPRLALSTRYSPDEMNNSPNFEEKRKFLTFFNLTHISAEKRKDKERLVEMLRAMKQRALSAADSVTNSSRDSPPVSLSEPATQPAPLETDQPVGVPASLSDVPKTTETGRLEQLRPQELLRVQEPAPPSGEKARLSEAPGGKKSLSMLHYLRGAAPKDIPVPLSHSINGKSKPWEPFVAEEFAHQFHESVLQSTQKALQKHKGNSALLSAEQSHKVDTAIHYNIPELQSSSRVPLPQHNGQQEPPMGRKGPPMQEADQDSEEDSEEDSEEEAEEAPRRQWQGIEAIFEAYQEHIEEQNLERQVLQTQCRRLEAQNYSLSLTAEQLSHSMAELRSQKQKMVSERERLQAELDHLRKCLALPTMHWPRGYFKGYPR.

Positions 1 to 154 (MKGMSHEPKS…GSRGSSSGRE (154 aa)) are disordered. At S10 the chain carries Phosphoserine. The span at 15-33 (MLSTATRTTATVNPLTPSP) shows a compositional bias: polar residues. Low complexity-rich tracts occupy residues 51–63 (SAQA…FAAA) and 76–89 (GSSL…VSSP). 2 positions are modified to phosphoserine: S84 and S95. A compositionally biased stretch (low complexity) spans 103-114 (VPMGPIIVPPGG). R305 is subject to Asymmetric dimethylarginine. A coiled-coil region spans residues 319-402 (HSERMSSLSA…REKELLAAKA (84 aa)). The tract at residues 326-384 (LSAERLQMDEELRREREREREREREADREREKEREREQREKEREKELEREREKEREREL) is disordered. The segment covering 331–384 (LQMDEELRREREREREREREADREREKEREREQREKEREKELEREREKEREREL) has biased composition (basic and acidic residues). T433 bears the Phosphothreonine mark. K496 carries the post-translational modification N6-acetyllysine. Disordered stretches follow at residues 527–579 (LDLG…QHTV) and 630–719 (SEKA…TARG). Composition is skewed to basic and acidic residues over residues 537-560 (EAEH…REPP) and 630-643 (SEKA…EATP). Residues 648-657 (QPPPPPPPPR) show a composition bias toward pro residues. The segment covering 681 to 700 (STQTILGQQRPSLSQATSFG) has biased composition (polar residues). K739 is modified (N6-acetyllysine). 4 positions are modified to phosphoserine: S766, S826, S828, and S857. Disordered stretches follow at residues 816-858 (RKRR…NNSP), 898-979 (LSAA…EAPG), and 1065-1118 (ELQS…PRRQ). Polar residues predominate over residues 847 to 858 (TRYSPDEMNNSP). T905 is modified (phosphothreonine). The residue at position 907 (S907) is a Phosphoserine. A compositionally biased stretch (polar residues) spans 1065–1081 (ELQSSSRVPLPQHNGQQ). Residues 1093–1197 (QEADQDSEED…ELDHLRKCLA (105 aa)) adopt a coiled-coil conformation. Positions 1095–1112 (ADQDSEEDSEEDSEEEAE) are enriched in acidic residues. The residue at position 1099 (S1099) is a Phosphoserine.

In terms of assembly, may be a component of a BHC histone deacetylase complex that contains HDAC1, HDAC2, HMG20B/BRAF35, KDM1A, RCOR1/CoREST, PHF21A/BHC80, ZMYM2, ZNF217, ZMYM3, GSE1 and GTF2I.

The sequence is that of Genetic suppressor element 1 (Gse1) from Mus musculus (Mouse).